Consider the following 196-residue polypeptide: Probable malonic semialdehyde reductase RutE (196 aa).

The protein belongs to the nitroreductase family. HadB/RutE subfamily. It depends on FMN as a cofactor.

The enzyme catalyses 3-hydroxypropanoate + NADP(+) = 3-oxopropanoate + NADPH + H(+). Its function is as follows. May reduce toxic product malonic semialdehyde to 3-hydroxypropionic acid, which is excreted. The chain is Probable malonic semialdehyde reductase RutE from Cronobacter sakazakii (strain ATCC BAA-894) (Enterobacter sakazakii).